The chain runs to 454 residues: Argininosuccinate synthase (454 aa).

ATP contacts are provided by residues 17-25 (AFSGGLDTS) and Ala43. Tyr99 contributes to the L-citrulline binding site. The ATP site is built by Gly129 and Thr131. L-aspartate contacts are provided by Thr131, Asn135, and Asp136. Asn135 is an L-citrulline binding site. ATP is bound at residue Asp136. Residues Arg139 and Ser192 each coordinate L-citrulline. Asp194 provides a ligand contact to ATP. Residues Thr201, Glu203, and Glu280 each coordinate L-citrulline.

It belongs to the argininosuccinate synthase family. Type 2 subfamily. As to quaternary structure, homotetramer.

Its subcellular location is the cytoplasm. It catalyses the reaction L-citrulline + L-aspartate + ATP = 2-(N(omega)-L-arginino)succinate + AMP + diphosphate + H(+). It participates in amino-acid biosynthesis; L-arginine biosynthesis; L-arginine from L-ornithine and carbamoyl phosphate: step 2/3. The chain is Argininosuccinate synthase from Yersinia enterocolitica serotype O:8 / biotype 1B (strain NCTC 13174 / 8081).